The following is a 320-amino-acid chain: Cytochrome f (320 aa).

A signal peptide spans 1-35; it reads MQTRNAFSWLKKQITRSISVSLMIYILTRTSISSA. Heme contacts are provided by Y36, C56, C59, and H60. Residues 286–306 traverse the membrane as a helical segment; sequence VQGLLFFLASVILAQIFLVLK.

The protein belongs to the cytochrome f family. In terms of assembly, the 4 large subunits of the cytochrome b6-f complex are cytochrome b6, subunit IV (17 kDa polypeptide, petD), cytochrome f and the Rieske protein, while the 4 small subunits are PetG, PetL, PetM and PetN. The complex functions as a dimer. Heme serves as cofactor.

It localises to the plastid. The protein resides in the chloroplast thylakoid membrane. In terms of biological role, component of the cytochrome b6-f complex, which mediates electron transfer between photosystem II (PSII) and photosystem I (PSI), cyclic electron flow around PSI, and state transitions. The protein is Cytochrome f of Nicotiana sylvestris (Wood tobacco).